The chain runs to 423 residues: ATP-citrate synthase alpha chain protein 2 (423 aa).

The citrate site is built by Asn343, Thr345, and Arg376.

It belongs to the succinate/malate CoA ligase beta subunit family. As to quaternary structure, heterooctamer of 4 alpha and 4 beta chains.

It localises to the cytoplasm. The protein localises to the cytosol. The catalysed reaction is oxaloacetate + acetyl-CoA + ADP + phosphate = citrate + ATP + CoA. Its function is as follows. ATP citrate-lyase is the primary enzyme responsible for the synthesis of cytosolic acetyl-CoA, used for the elongation of fatty acids and biosynthesis of isoprenoids, flavonoids and malonated derivatives. May supply substrate to the cytosolic acetyl-CoA carboxylase, which generates the malonyl-CoA used for the synthesis of a multitude of compounds, including very long chain fatty acids and flavonoids. In contrast to all known animal ACL enzymes having a homomeric structure, plant ACLs are composed of alpha and beta chains. This Oryza sativa subsp. japonica (Rice) protein is ATP-citrate synthase alpha chain protein 2 (ACLA-2).